Reading from the N-terminus, the 302-residue chain is Sulfate adenylyltransferase subunit 2 (302 aa).

The protein belongs to the PAPS reductase family. CysD subfamily. Heterodimer composed of CysD, the smaller subunit, and CysN.

The catalysed reaction is sulfate + ATP + H(+) = adenosine 5'-phosphosulfate + diphosphate. The protein operates within sulfur metabolism; hydrogen sulfide biosynthesis; sulfite from sulfate: step 1/3. Its function is as follows. With CysN forms the ATP sulfurylase (ATPS) that catalyzes the adenylation of sulfate producing adenosine 5'-phosphosulfate (APS) and diphosphate, the first enzymatic step in sulfur assimilation pathway. APS synthesis involves the formation of a high-energy phosphoric-sulfuric acid anhydride bond driven by GTP hydrolysis by CysN coupled to ATP hydrolysis by CysD. This is Sulfate adenylyltransferase subunit 2 from Methylococcus capsulatus (strain ATCC 33009 / NCIMB 11132 / Bath).